The primary structure comprises 118 residues: Large ribosomal subunit protein bL20 (118 aa).

Belongs to the bacterial ribosomal protein bL20 family.

Binds directly to 23S ribosomal RNA and is necessary for the in vitro assembly process of the 50S ribosomal subunit. It is not involved in the protein synthesizing functions of that subunit. The polypeptide is Large ribosomal subunit protein bL20 (Staphylococcus epidermidis (strain ATCC 35984 / DSM 28319 / BCRC 17069 / CCUG 31568 / BM 3577 / RP62A)).